The sequence spans 423 residues: Histidine--tRNA ligase 2 (423 aa).

It belongs to the class-II aminoacyl-tRNA synthetase family. In terms of assembly, homodimer.

The protein resides in the cytoplasm. It carries out the reaction tRNA(His) + L-histidine + ATP = L-histidyl-tRNA(His) + AMP + diphosphate + H(+). The chain is Histidine--tRNA ligase 2 from Bacillus anthracis.